The following is a 285-amino-acid chain: UPF0014 membrane protein STAR2 (285 aa).

Transmembrane regions (helical) follow at residues 30–50, 64–84, 88–108, 119–139, 148–168, 203–225, and 240–262; these read FLVG…AVAL, YAMA…QFIF, SAAW…YTAG, HIAA…LVAL, YIIP…GVTM, SLVI…ALPG, and AIQL…SILS.

The protein belongs to the UPF0014 family. In terms of assembly, interacts with STAR2. In terms of tissue distribution, expressed in roots.

It localises to the membrane. Its function is as follows. Associates with STAR2 to form a functional transmembrane ABC transporter required for detoxification of aluminum (Al) in roots. Can specifically transport UDP-glucose. This Oryza sativa subsp. japonica (Rice) protein is UPF0014 membrane protein STAR2.